A 125-amino-acid polypeptide reads, in one-letter code: UPF0251 protein Dhaf_1981 (125 aa).

Belongs to the UPF0251 family.

In Desulfitobacterium hafniense (strain DSM 10664 / DCB-2), this protein is UPF0251 protein Dhaf_1981.